The chain runs to 351 residues: UDP-glucose 4-epimerase 5 (351 aa).

Residues glycine 13–isoleucine 15, aspartate 34–asparagine 38, aspartate 64–leucine 65, phenylalanine 86, and lysine 90 contribute to the NAD(+) site. Serine 130 to threonine 132 contributes to the substrate binding site. Catalysis depends on tyrosine 154, which acts as the Proton acceptor. Residues lysine 158 and tyrosine 182 each contribute to the NAD(+) site. Substrate contacts are provided by residues tyrosine 182–asparagine 184, asparagine 203–leucine 205, threonine 221–phenylalanine 223, arginine 236, and arginine 298–aspartate 301.

Belongs to the NAD(P)-dependent epimerase/dehydratase family. In terms of assembly, forms homodimers and heterodimers. Requires NAD(+) as cofactor. Widely expressed.

It catalyses the reaction UDP-alpha-D-glucose = UDP-alpha-D-galactose. It functions in the pathway carbohydrate metabolism; galactose metabolism. With respect to regulation, enhanced activity by NaCl. Inhibited by UDP. Its function is as follows. Catalyzes the interconversion between UDP-glucose and UDP-galactose. The sequence is that of UDP-glucose 4-epimerase 5 from Arabidopsis thaliana (Mouse-ear cress).